We begin with the raw amino-acid sequence, 748 residues long: MSSGGRFNFDDGGSYCGGWEDGKAHGHGVCTGPKGQGEYTGSWSHGFEVLGVYTWPSGNTYQGTWAQGKRHGIGLESKGKWVYKGEWTHGFKGRYGVRECAGNGAKYEGTWSNGLQDGYGTETYSDGGTYQGQWVGGMRQGYGVRQSVPYGMAAVIRSPLRTSINSLRSEHTNGTALHPDASPAVAGSPAVSRGGFVLVAHSDSEILKSKKKGLFRRSLLSGLKLRKSESKSSLASQRSKQSSFRSEAGMSTVSSTASDIHSTISLGEAEAELAVIEDDIDATTTETYVGEWKNDKRSGFGVSQRSDGLKYEGEWASNRRHGYGCMTFPDGTKEEGKYKQNILVGGKRKNLIPLRASKIREKVDRAVEAAERAATIAKQKAEIAASRTSHSRAKAEAALTAAQKAQEEARIARITAKEFSPSFQHRENGLEYQRPKRQTSCDDIEVLSTGTPLQQESPELYRKGTTPSDLTPDDSPLQSFPTSPAATPPPAPAARNKVAHFSRQVSVDEERGGDIQMLLEGRAGDCARSSWGEEQAGGSRGVRSGALRGGLLVDDFRTRGSGRKQPGNPKPRERRTESPPVFTWTSHHRASNHSPGGSRLLELQEEKLSNYRMEMKPLLRMETHPQKRRYSKGGACRGLGDDHRPEDRGFGVQRLRSKAQNKENFRPASSAEPAVQKLASLRLGGAEPRLLRWDLTFSPPQKSLPVALESDEENGDELKSSTGSAPILVVMVILLNIGVAILFINFFI.

Residues 1 to 727 (MSSGGRFNFD…LKSSTGSAPI (727 aa)) are Cytoplasmic-facing. MORN repeat units lie at residues 15–37 (YCGG…KGQG), 39–60 (YTGS…SGNT), 61–82 (YQGT…GKWV), 83–105 (YKGE…GNGA), 107–129 (YEGT…DGGT), and 130–152 (YQGQ…PYGM). Residues 230 to 259 (SKSSLASQRSKQSSFRSEAGMSTVSSTASD) form a disordered region. Residues 231-244 (KSSLASQRSKQSSF) are compositionally biased toward low complexity. A compositionally biased stretch (polar residues) spans 249 to 259 (GMSTVSSTASD). MORN repeat units follow at residues 288 to 310 (YVGE…DGLK) and 311 to 333 (YEGE…DGTK). The tract at residues 416–496 (AKEFSPSFQH…TPPPAPAARN (81 aa)) is disordered. S440 is modified (phosphoserine). The segment covering 448–457 (STGTPLQQES) has biased composition (polar residues). The residue at position 451 (T451) is a Phosphothreonine. At S457 the chain carries Phosphoserine. T471 is modified (phosphothreonine). Residues S475 and S506 each carry the phosphoserine modification. Disordered stretches follow at residues 526-597 (CARS…SPGG) and 624-649 (HPQK…EDRG). A compositionally biased stretch (basic and acidic residues) spans 639-649 (LGDDHRPEDRG). A phosphoserine mark is found at S703 and S710. Residues 728–748 (LVVMVILLNIGVAILFINFFI) form a helical; Anchor for type IV membrane protein membrane-spanning segment.

Belongs to the junctophilin family. In terms of tissue distribution, specifically expressed in brain.

It localises to the cell membrane. The protein localises to the endoplasmic reticulum membrane. Its function is as follows. Junctophilins contribute to the formation of junctional membrane complexes (JMCs) which link the plasma membrane with the endoplasmic or sarcoplasmic reticulum in excitable cells. Provides a structural foundation for functional cross-talk between the cell surface and intracellular calcium release channels. JPH3 is brain-specific and appears to have an active role in certain neurons involved in motor coordination and memory. The polypeptide is Junctophilin-3 (JPH3) (Homo sapiens (Human)).